Reading from the N-terminus, the 523-residue chain is ATP synthase subunit alpha (523 aa).

179 to 186 contacts ATP; sequence GDRQTGKT.

Belongs to the ATPase alpha/beta chains family. F-type ATPases have 2 components, CF(1) - the catalytic core - and CF(0) - the membrane proton channel. CF(1) has five subunits: alpha(3), beta(3), gamma(1), delta(1), epsilon(1). CF(0) has three main subunits: a(1), b(2) and c(9-12). The alpha and beta chains form an alternating ring which encloses part of the gamma chain. CF(1) is attached to CF(0) by a central stalk formed by the gamma and epsilon chains, while a peripheral stalk is formed by the delta and b chains.

The protein resides in the cell inner membrane. The enzyme catalyses ATP + H2O + 4 H(+)(in) = ADP + phosphate + 5 H(+)(out). Functionally, produces ATP from ADP in the presence of a proton gradient across the membrane. The alpha chain is a regulatory subunit. The protein is ATP synthase subunit alpha of Vibrio vulnificus (strain YJ016).